Here is a 460-residue protein sequence, read N- to C-terminus: NADH-ubiquinone oxidoreductase chain 4 (460 aa).

12 helical membrane-spanning segments follow: residues 20 to 42 (PKWL…LMWF), 61 to 81 (PLST…ILAS), 93 to 113 (QRLY…AFGA), 114 to 134 (TEII…LIII), 148 to 168 (TYFL…LLLL), 195 to 215 (IWWA…GVHL), 225 to 245 (PVAG…YGMM), 258 to 278 (LAYP…SICL), 285 to 304 (SLIA…GILI), 308 to 330 (WGFS…LFCL), 351 to 371 (IIFP…LALP), and 394 to 414 (ILLT…MFLM).

It belongs to the complex I subunit 4 family.

It localises to the mitochondrion membrane. The enzyme catalyses a ubiquinone + NADH + 5 H(+)(in) = a ubiquinol + NAD(+) + 4 H(+)(out). Functionally, core subunit of the mitochondrial membrane respiratory chain NADH dehydrogenase (Complex I) that is believed to belong to the minimal assembly required for catalysis. Complex I functions in the transfer of electrons from NADH to the respiratory chain. The immediate electron acceptor for the enzyme is believed to be ubiquinone. The chain is NADH-ubiquinone oxidoreductase chain 4 (MT-ND4) from Carassius auratus (Goldfish).